A 240-amino-acid polypeptide reads, in one-letter code: Ribonuclease HII (240 aa).

An RNase H type-2 domain is found at 33–222 (GPVAGVDEVG…VRRIVTRSNT (190 aa)). Residues Asp-39, Glu-40, and Asp-131 each coordinate a divalent metal cation.

The protein belongs to the RNase HII family. Requires Mn(2+) as cofactor. Mg(2+) serves as cofactor.

It is found in the cytoplasm. The catalysed reaction is Endonucleolytic cleavage to 5'-phosphomonoester.. Functionally, endonuclease that specifically degrades the RNA of RNA-DNA hybrids. The sequence is that of Ribonuclease HII from Mycobacterium leprae (strain Br4923).